A 255-amino-acid chain; its full sequence is 4-hydroxy-tetrahydrodipicolinate reductase (255 aa).

NAD(+)-binding positions include 9–14 (GFKGKM), 89–91 (GTT), and 115–118 (APNF). Residue His145 is the Proton donor/acceptor of the active site. A (S)-2,3,4,5-tetrahydrodipicolinate-binding site is contributed by His146. The Proton donor role is filled by Lys149. 155–156 (GT) is a binding site for (S)-2,3,4,5-tetrahydrodipicolinate.

It belongs to the DapB family.

The protein localises to the cytoplasm. The enzyme catalyses (S)-2,3,4,5-tetrahydrodipicolinate + NAD(+) + H2O = (2S,4S)-4-hydroxy-2,3,4,5-tetrahydrodipicolinate + NADH + H(+). It carries out the reaction (S)-2,3,4,5-tetrahydrodipicolinate + NADP(+) + H2O = (2S,4S)-4-hydroxy-2,3,4,5-tetrahydrodipicolinate + NADPH + H(+). The protein operates within amino-acid biosynthesis; L-lysine biosynthesis via DAP pathway; (S)-tetrahydrodipicolinate from L-aspartate: step 4/4. In terms of biological role, catalyzes the conversion of 4-hydroxy-tetrahydrodipicolinate (HTPA) to tetrahydrodipicolinate. This is 4-hydroxy-tetrahydrodipicolinate reductase from Streptococcus suis (strain 98HAH33).